Reading from the N-terminus, the 393-residue chain is Heparan sulfate glucosamine 3-O-sulfotransferase 3A1 (393 aa).

At 1-24 the chain is on the cytoplasmic side; that stretch reads MAPSGPTGAQPSPAEPLSRSIFRK. Residues 25–43 form a helical; Signal-anchor for type II membrane protein membrane-spanning segment; sequence FLLMLCSLLTSLYVFYCLA. The Lumenal portion of the chain corresponds to 44 to 393; the sequence is ERCPPGSGPV…MTGRDFGWDG (350 aa). Residues 85 to 121 form a disordered region; it reads QRRRRGRSGPGDSSDQEEQSPGLAAAPGGSGAGSSVA. Residue 149–153 participates in 3'-phosphoadenylyl sulfate binding; that stretch reads KGGTR. Substrate is bound by residues 171–177 and 202–205; these read EPHFFDR and KTPS. 2 residues coordinate 3'-phosphoadenylyl sulfate: arginine 230 and serine 238. Asparagine 260 is a glycosylation site (N-linked (GlcNAc...) asparagine). 270-271 contacts substrate; that stretch reads WS. N-linked (GlcNAc...) asparagine glycosylation is present at asparagine 331. Cysteine 338 and cysteine 350 are oxidised to a cystine. 3'-phosphoadenylyl sulfate is bound at residue 355 to 359; sequence KGRAH.

The protein belongs to the sulfotransferase 1 family.

Its subcellular location is the golgi apparatus membrane. The catalysed reaction is alpha-D-glucosaminyl-[heparan sulfate](n) + 3'-phosphoadenylyl sulfate = 3-sulfo-alpha-D-glucosaminyl-[heparan sulfate](n) + adenosine 3',5'-bisphosphate + H(+). Its function is as follows. Sulfotransferase that utilizes 3'-phospho-5'-adenylyl sulfate (PAPS) to catalyze the transfer of a sulfo group to an N-unsubstituted glucosamine linked to a 2-O-sulfo iduronic acid unit on heparan sulfate. Catalyzes the O-sulfation of glucosamine in IdoUA2S-GlcNS and also in IdoUA2S-GlcNH2. Unlike HS3ST1/3-OST-1, does not convert non-anticoagulant heparan sulfate to anticoagulant heparan sulfate. This Mus musculus (Mouse) protein is Heparan sulfate glucosamine 3-O-sulfotransferase 3A1 (Hs3st3a1).